The chain runs to 231 residues: NADH-quinone oxidoreductase subunit C (231 aa).

This sequence belongs to the complex I 30 kDa subunit family. NDH-1 is composed of 14 different subunits. Subunits NuoB, C, D, E, F, and G constitute the peripheral sector of the complex.

The protein resides in the cell membrane. It carries out the reaction a quinone + NADH + 5 H(+)(in) = a quinol + NAD(+) + 4 H(+)(out). Functionally, NDH-1 shuttles electrons from NADH, via FMN and iron-sulfur (Fe-S) centers, to quinones in the respiratory chain. The immediate electron acceptor for the enzyme in this species is believed to be a menaquinone. Couples the redox reaction to proton translocation (for every two electrons transferred, four hydrogen ions are translocated across the cytoplasmic membrane), and thus conserves the redox energy in a proton gradient. This is NADH-quinone oxidoreductase subunit C from Mycobacterium sp. (strain JLS).